We begin with the raw amino-acid sequence, 701 residues long: ER-retained PMA1-suppressing protein 1 (701 aa).

Positions 1–27 (MKMNLKRLVVTFFSCITFLLKFTIAAA) are cleaved as a signal peptide. The Thioredoxin 1 domain maps to 28–142 (EPPEGFPEPL…LIAFARRESM (115 aa)). Residues Cys-60 and Cys-63 are joined by a disulfide bond. N-linked (GlcNAc...) asparagine glycosylation is present at Asn-85. A disulfide bridge links Cys-200 with Cys-203. 3 N-linked (GlcNAc...) asparagine glycosylation sites follow: Asn-264, Asn-299, and Asn-370. The 39-residue stretch at 408-446 (PTFFMFKDGDPISYVFPGYSTTEMRNIDAIMDWVKKYSN) folds into the Thioredoxin 2 domain. A helical membrane pass occupies residues 646 to 666 (IIHGNGMPGYLIVIVLFIAIL).

It belongs to the protein disulfide isomerase family. In terms of assembly, interacts with mutated PMA1-D378N but not wild type PMA1. Interacts with EUG1, KAR2, MPD1 and PDI1.

It is found in the endoplasmic reticulum membrane. It catalyses the reaction Catalyzes the rearrangement of -S-S- bonds in proteins.. Functionally, acts as a membrane-bound chaperone in endoplasmic reticulum quality control. Probably facilitates presentation of substrate to membrane-bound components of the degradation machinery. The chain is ER-retained PMA1-suppressing protein 1 (EPS1) from Saccharomyces cerevisiae (strain ATCC 204508 / S288c) (Baker's yeast).